The chain runs to 342 residues: Protein RecA 1 (342 aa).

Position 68–75 (68–75) interacts with ATP; it reads GNESSGKT.

It belongs to the RecA family.

It localises to the cytoplasm. Functionally, can catalyze the hydrolysis of ATP in the presence of single-stranded DNA, the ATP-dependent uptake of single-stranded DNA by duplex DNA, and the ATP-dependent hybridization of homologous single-stranded DNAs. It interacts with LexA causing its activation and leading to its autocatalytic cleavage. This is Protein RecA 1 from Myxococcus xanthus.